The primary structure comprises 107 residues: Toluene 1,2-dioxygenase system ferredoxin subunit (107 aa).

One can recognise a Rieske domain in the interval 4–99 (TYILRQGDLP…IKVEGDEVHV (96 aa)). 4 residues coordinate [2Fe-2S] cluster: Cys43, His45, Cys62, and His65.

It belongs to the bacterial ring-hydroxylating dioxygenase ferredoxin component family. This dioxygenase system consists of four proteins: the two subunits of the hydroxylase component (todC1 and todC2), a ferredoxin (TodB) and a ferredoxin reductase (TodA).

The protein operates within xenobiotic degradation; toluene degradation. Functionally, this protein seems to be a 2Fe-2S ferredoxin. This chain is Toluene 1,2-dioxygenase system ferredoxin subunit (todB), found in Pseudomonas putida (strain ATCC 700007 / DSM 6899 / JCM 31910 / BCRC 17059 / LMG 24140 / F1).